We begin with the raw amino-acid sequence, 217 residues long: MNKQAIQSIVAEVVQQLSQTTKQSNTVPMAVSARHCHLSIEDVEALFGAGYELTKKSDLSQPGQFAANETVTIVGPKGSIEKVRVLGPARSITQVEVSKTDSIKLGAVPPLRESGDIKNSEAITLVGPKGSIYKKEGLIIARAHIHMTPDDAEAYGVKNGQCVRITSQGERPTTLERVLIRVSPKFKLEMHIDTDEANAGLISTGDTGILSLYEEAL.

Position 31 to 33 (31 to 33 (VSA)) interacts with CoA. Residues His35 and His37 each contribute to the Zn(2+) site. Residues Lys77 and Arg84 each contribute to the CoA site. A phosphate-binding site is contributed by Arg90. Zn(2+) is bound by residues Glu96, His144, His146, and His191. Asn198 serves as a coordination point for CoA.

The protein belongs to the PduL family. Requires Zn(2+) as cofactor.

Its subcellular location is the bacterial microcompartment. The enzyme catalyses propanoyl-CoA + phosphate = propanoyl phosphate + CoA. It participates in polyol metabolism; 1,2-propanediol degradation. Functionally, involved in 1,2-propanediol (1,2-PD) utilization within the bacterial microcompartment (BMC) dedicated to 1,2-PD degradation by catalyzing the conversion of propanoyl-CoA to propanoyl-phosphate. The protein is Phosphate propanoyltransferase (pduL) of Priestia megaterium (strain DSM 319 / IMG 1521) (Bacillus megaterium).